Reading from the N-terminus, the 567-residue chain is Urease subunit alpha 1 (567 aa).

One can recognise a Urease domain in the interval 128-567; the sequence is GAVDTHVHYI…LPLAQLYHLF (440 aa). Ni(2+)-binding residues include His133, His135, and Lys216. The residue at position 216 (Lys216) is an N6-carboxylysine. Residue His218 coordinates substrate. Residues His245 and His271 each contribute to the Ni(2+) site. His319 functions as the Proton donor in the catalytic mechanism. Asp359 is a Ni(2+) binding site.

This sequence belongs to the metallo-dependent hydrolases superfamily. Urease alpha subunit family. In terms of assembly, heterotrimer of UreA (gamma), UreB (beta) and UreC (alpha) subunits. Three heterotrimers associate to form the active enzyme. Ni cation is required as a cofactor. Post-translationally, carboxylation allows a single lysine to coordinate two nickel ions.

The protein localises to the cytoplasm. The enzyme catalyses urea + 2 H2O + H(+) = hydrogencarbonate + 2 NH4(+). It participates in nitrogen metabolism; urea degradation; CO(2) and NH(3) from urea (urease route): step 1/1. The sequence is that of Urease subunit alpha 1 from Psychrobacter cryohalolentis (strain ATCC BAA-1226 / DSM 17306 / VKM B-2378 / K5).